The sequence spans 150 residues: 6,7-dimethyl-8-ribityllumazine synthase (150 aa).

5-amino-6-(D-ribitylamino)uracil contacts are provided by residues phenylalanine 11, 43–45, and 67–69; these read TYE and AVI. A (2S)-2-hydroxy-3-oxobutyl phosphate-binding site is contributed by 72–73; sequence AT. Catalysis depends on histidine 75, which acts as the Proton donor. Leucine 100 contributes to the 5-amino-6-(D-ribitylamino)uracil binding site. Residue arginine 115 coordinates (2S)-2-hydroxy-3-oxobutyl phosphate.

It belongs to the DMRL synthase family.

It carries out the reaction (2S)-2-hydroxy-3-oxobutyl phosphate + 5-amino-6-(D-ribitylamino)uracil = 6,7-dimethyl-8-(1-D-ribityl)lumazine + phosphate + 2 H2O + H(+). It functions in the pathway cofactor biosynthesis; riboflavin biosynthesis; riboflavin from 2-hydroxy-3-oxobutyl phosphate and 5-amino-6-(D-ribitylamino)uracil: step 1/2. Its function is as follows. Catalyzes the formation of 6,7-dimethyl-8-ribityllumazine by condensation of 5-amino-6-(D-ribitylamino)uracil with 3,4-dihydroxy-2-butanone 4-phosphate. This is the penultimate step in the biosynthesis of riboflavin. The polypeptide is 6,7-dimethyl-8-ribityllumazine synthase (Staphylothermus marinus (strain ATCC 43588 / DSM 3639 / JCM 9404 / F1)).